The sequence spans 383 residues: Hydroxymethylglutaryl-CoA synthase (383 aa).

(3S)-3-hydroxy-3-methylglutaryl-CoA is bound at residue Asp-29. Glu-79 functions as the Proton donor/acceptor in the catalytic mechanism. Residues Cys-111, Thr-152, Ser-201, His-233, Lys-242, Asn-275, and Ser-308 each contribute to the (3S)-3-hydroxy-3-methylglutaryl-CoA site. The active-site Acyl-thioester intermediate is the Cys-111. The Proton donor/acceptor role is filled by His-233.

Belongs to the thiolase-like superfamily. HMG-CoA synthase family. In terms of assembly, homodimer.

It catalyses the reaction acetoacetyl-CoA + acetyl-CoA + H2O = (3S)-3-hydroxy-3-methylglutaryl-CoA + CoA + H(+). The protein operates within metabolic intermediate biosynthesis; (R)-mevalonate biosynthesis; (R)-mevalonate from acetyl-CoA: step 2/3. Its activity is regulated as follows. Is sensitive to feedback substrate inhibition by acetoacetyl-CoA. Is inactivated by hymeglusin, which also blocks the growth of E.faecalis, indicating the critical role that the mevalonate pathway plays in isoprenoid biosynthesis. Functionally, catalyzes the condensation of acetyl-CoA with acetoacetyl-CoA to form 3-hydroxy-3-methylglutaryl-CoA (HMG-CoA). Functions in the mevalonate (MVA) pathway leading to isopentenyl diphosphate (IPP), a key precursor for the biosynthesis of isoprenoid compounds. The protein is Hydroxymethylglutaryl-CoA synthase (mvaS) of Enterococcus faecalis (Streptococcus faecalis).